A 406-amino-acid polypeptide reads, in one-letter code: Elongation factor Tu-A (406 aa).

The region spanning K10 to V215 is the tr-type G domain. Residues G19–T26 form a G1 region. Position 19–26 (G19–T26) interacts with GTP. A Mg(2+)-binding site is contributed by T26. The interval G61–N65 is G2. The segment at D82–G85 is G3. Residues D82–H86 and N137–D140 each bind GTP. The G4 stretch occupies residues N137–D140. Positions S175 to L177 are G5. T395 bears the Phosphothreonine mark.

This sequence belongs to the TRAFAC class translation factor GTPase superfamily. Classic translation factor GTPase family. EF-Tu/EF-1A subfamily. Monomer. Binds to the 70S ribosome, contacts tmRNA during trans-translation. Phosphorylated on a threonine.

The protein resides in the cytoplasm. The enzyme catalyses GTP + H2O = GDP + phosphate + H(+). GTP hydrolase that promotes the GTP-dependent binding of aminoacyl-tRNA to the A-site of ribosomes during protein biosynthesis. Its function is as follows. EF-Tu-GDP binds to the acceptor arm of tmRNA by interacting with its acceptor arm, suggesting that GTP hydrolysis by EF-Tu is essential for tmRNA function. In terms of biological role, protects glycyl-tRNA(Gly) from hydrolysis by E.coli D-aminoacyl-tRNA deacylase (dtd). In Thermus thermophilus (strain ATCC 27634 / DSM 579 / HB8), this protein is Elongation factor Tu-A.